Reading from the N-terminus, the 193-residue chain is Protein GrpE (193 aa).

The interval 1 to 26 (MTKKHHKEQEEIQETIKTEAAEENVG) is disordered. Positions 7 to 20 (KEQEEIQETIKTEA) are enriched in basic and acidic residues.

This sequence belongs to the GrpE family. In terms of assembly, homodimer.

Its subcellular location is the cytoplasm. Participates actively in the response to hyperosmotic and heat shock by preventing the aggregation of stress-denatured proteins, in association with DnaK and GrpE. It is the nucleotide exchange factor for DnaK and may function as a thermosensor. Unfolded proteins bind initially to DnaJ; upon interaction with the DnaJ-bound protein, DnaK hydrolyzes its bound ATP, resulting in the formation of a stable complex. GrpE releases ADP from DnaK; ATP binding to DnaK triggers the release of the substrate protein, thus completing the reaction cycle. Several rounds of ATP-dependent interactions between DnaJ, DnaK and GrpE are required for fully efficient folding. The protein is Protein GrpE of Chlorobaculum parvum (strain DSM 263 / NCIMB 8327) (Chlorobium vibrioforme subsp. thiosulfatophilum).